The following is a 101-amino-acid chain: Urease subunit beta (101 aa).

Belongs to the urease beta subunit family. In terms of assembly, heterotrimer of UreA (gamma), UreB (beta) and UreC (alpha) subunits. Three heterotrimers associate to form the active enzyme.

Its subcellular location is the cytoplasm. The catalysed reaction is urea + 2 H2O + H(+) = hydrogencarbonate + 2 NH4(+). The protein operates within nitrogen metabolism; urea degradation; CO(2) and NH(3) from urea (urease route): step 1/1. The sequence is that of Urease subunit beta from Rhizobium leguminosarum bv. trifolii (strain WSM2304).